A 477-amino-acid chain; its full sequence is Bifunctional protein HldE (477 aa).

The interval 1 to 318 is ribokinase; that stretch reads MKVTLPEFER…ENAVRGRADT (318 aa). The residue at position 179 (K179) is an N6-acetyllysine. An ATP-binding site is contributed by 195-198; sequence NLSE. D264 is an active-site residue. A cytidylyltransferase region spans residues 344-477; that stretch reads MTNGVFDILH…IKKIQQDKKG (134 aa).

The protein in the N-terminal section; belongs to the carbohydrate kinase PfkB family. It in the C-terminal section; belongs to the cytidylyltransferase family. In terms of assembly, homodimer.

The catalysed reaction is D-glycero-beta-D-manno-heptose 7-phosphate + ATP = D-glycero-beta-D-manno-heptose 1,7-bisphosphate + ADP + H(+). It catalyses the reaction D-glycero-beta-D-manno-heptose 1-phosphate + ATP + H(+) = ADP-D-glycero-beta-D-manno-heptose + diphosphate. Its pathway is nucleotide-sugar biosynthesis; ADP-L-glycero-beta-D-manno-heptose biosynthesis; ADP-L-glycero-beta-D-manno-heptose from D-glycero-beta-D-manno-heptose 7-phosphate: step 1/4. The protein operates within nucleotide-sugar biosynthesis; ADP-L-glycero-beta-D-manno-heptose biosynthesis; ADP-L-glycero-beta-D-manno-heptose from D-glycero-beta-D-manno-heptose 7-phosphate: step 3/4. It functions in the pathway bacterial outer membrane biogenesis; LPS core biosynthesis. Catalyzes the phosphorylation of D-glycero-D-manno-heptose 7-phosphate at the C-1 position to selectively form D-glycero-beta-D-manno-heptose-1,7-bisphosphate. Its function is as follows. Catalyzes the ADP transfer from ATP to D-glycero-beta-D-manno-heptose 1-phosphate, yielding ADP-D-glycero-beta-D-manno-heptose. In Shigella flexneri, this protein is Bifunctional protein HldE.